We begin with the raw amino-acid sequence, 173 residues long: Translation initiation factor IF-3 (173 aa).

The protein belongs to the IF-3 family. In terms of assembly, monomer.

Its subcellular location is the cytoplasm. Functionally, IF-3 binds to the 30S ribosomal subunit and shifts the equilibrium between 70S ribosomes and their 50S and 30S subunits in favor of the free subunits, thus enhancing the availability of 30S subunits on which protein synthesis initiation begins. In Lactiplantibacillus plantarum (strain ATCC BAA-793 / NCIMB 8826 / WCFS1) (Lactobacillus plantarum), this protein is Translation initiation factor IF-3.